Here is a 934-residue protein sequence, read N- to C-terminus: Bifunctional uridylyltransferase/uridylyl-removing enzyme (934 aa).

The segment at 1–379 (MSAHDLKLEE…TFSRRKRKLS (379 aa)) is uridylyltransferase. The uridylyl-removing stretch occupies residues 380-736 (DDGAFISENH…AKPHAFEAVT (357 aa)). Residues 496 to 613 (VDEHLLRCIA…IDFADTVQTM (118 aa)) enclose the HD domain. ACT domains lie at 737–818 (EITV…DMLA) and 848–931 (VIEV…RSPQ).

The protein belongs to the GlnD family. The cofactor is Mg(2+).

It catalyses the reaction [protein-PII]-L-tyrosine + UTP = [protein-PII]-uridylyl-L-tyrosine + diphosphate. The catalysed reaction is [protein-PII]-uridylyl-L-tyrosine + H2O = [protein-PII]-L-tyrosine + UMP + H(+). Uridylyltransferase (UTase) activity is inhibited by glutamine, while glutamine activates uridylyl-removing (UR) activity. Its function is as follows. Modifies, by uridylylation and deuridylylation, the PII regulatory proteins (GlnB and homologs), in response to the nitrogen status of the cell that GlnD senses through the glutamine level. Under low glutamine levels, catalyzes the conversion of the PII proteins and UTP to PII-UMP and PPi, while under higher glutamine levels, GlnD hydrolyzes PII-UMP to PII and UMP (deuridylylation). Thus, controls uridylylation state and activity of the PII proteins, and plays an important role in the regulation of nitrogen assimilation and metabolism. The chain is Bifunctional uridylyltransferase/uridylyl-removing enzyme from Brucella ovis (strain ATCC 25840 / 63/290 / NCTC 10512).